The sequence spans 816 residues: Protein hunchback (816 aa).

Disordered stretches follow at residues 33–92 (LSHH…QPMD), 129–151 (QQHF…GGFN), 165–185 (YYGG…PTAV), and 197–229 (ALTP…LMSN). 3 stretches are compositionally biased toward low complexity: residues 49 to 60 (SNSNSGASSPRQ), 79 to 89 (QQQQQQQQQQQ), and 129 to 139 (QQHFQAAQHQQ). T199 bears the Phosphothreonine mark. Residues S209, S228, S230, and S231 each carry the phosphoserine modification. The segment covering 219–229 (EPEKEHDLMSN) has biased composition (basic and acidic residues). C2H2-type zinc fingers lie at residues 261–283 (YKCK…TRTH), 290–312 (LQCA…IRKH), 318–340 (FQCD…RKSH), and 346–364 (YRCA…FKLH). Disordered stretches follow at residues 387–427 (VIDV…QQQQ), 536–612 (LQQQ…QLPH), and 679–734 (GSSA…SNPT). Low complexity-rich tracts occupy residues 399-427 (SKSF…QQQQ) and 536-560 (LQQQ…QQQQ). Positions 567 to 578 (NEEDEEEEEHED) are enriched in acidic residues. Phosphoserine occurs at positions 584 and 587. Residues 712–734 (SASSTASSSGNSSNASSSTSNPT) are compositionally biased toward low complexity. 2 consecutive C2H2-type zinc fingers follow at residues 763–785 (YECK…MGYH) and 791–815 (FKCN…RNAH).

This sequence belongs to the hunchback C2H2-type zinc-finger protein family.

The protein localises to the nucleus. Its function is as follows. Gap class segmentation protein that controls development of head structures. The sequence is that of Protein hunchback from Drosophila virilis (Fruit fly).